A 494-amino-acid polypeptide reads, in one-letter code: Guanosine-5'-triphosphate,3'-diphosphate pyrophosphatase (494 aa).

It belongs to the GppA/Ppx family. GppA subfamily.

The catalysed reaction is guanosine 3'-diphosphate 5'-triphosphate + H2O = guanosine 3',5'-bis(diphosphate) + phosphate + H(+). The protein operates within purine metabolism; ppGpp biosynthesis; ppGpp from GTP: step 2/2. Functionally, catalyzes the conversion of pppGpp to ppGpp. Guanosine pentaphosphate (pppGpp) is a cytoplasmic signaling molecule which together with ppGpp controls the 'stringent response', an adaptive process that allows bacteria to respond to amino acid starvation, resulting in the coordinated regulation of numerous cellular activities. This Erwinia tasmaniensis (strain DSM 17950 / CFBP 7177 / CIP 109463 / NCPPB 4357 / Et1/99) protein is Guanosine-5'-triphosphate,3'-diphosphate pyrophosphatase.